A 517-amino-acid polypeptide reads, in one-letter code: Crotonobetaine/carnitine--CoA ligase (517 aa).

This sequence belongs to the ATP-dependent AMP-binding enzyme family.

It carries out the reaction 4-(trimethylamino)butanoate + ATP + CoA = 4-(trimethylamino)butanoyl-CoA + AMP + diphosphate. The catalysed reaction is crotonobetaine + ATP + CoA = crotonobetainyl-CoA + AMP + diphosphate. The enzyme catalyses (R)-carnitine + ATP + CoA = (R)-carnitinyl-CoA + AMP + diphosphate. It functions in the pathway amine and polyamine metabolism; carnitine metabolism. Functionally, catalyzes the transfer of CoA to carnitine, generating the initial carnitinyl-CoA needed for the CaiB reaction cycle. Also has activity toward crotonobetaine and gamma-butyrobetaine. In Escherichia coli O6:K15:H31 (strain 536 / UPEC), this protein is Crotonobetaine/carnitine--CoA ligase.